Reading from the N-terminus, the 495-residue chain is Aspartyl/glutamyl-tRNA(Asn/Gln) amidotransferase subunit B (495 aa).

This sequence belongs to the GatB/GatE family. GatB subfamily. In terms of assembly, heterotrimer of A, B and C subunits.

It catalyses the reaction L-glutamyl-tRNA(Gln) + L-glutamine + ATP + H2O = L-glutaminyl-tRNA(Gln) + L-glutamate + ADP + phosphate + H(+). The enzyme catalyses L-aspartyl-tRNA(Asn) + L-glutamine + ATP + H2O = L-asparaginyl-tRNA(Asn) + L-glutamate + ADP + phosphate + 2 H(+). Its function is as follows. Allows the formation of correctly charged Asn-tRNA(Asn) or Gln-tRNA(Gln) through the transamidation of misacylated Asp-tRNA(Asn) or Glu-tRNA(Gln) in organisms which lack either or both of asparaginyl-tRNA or glutaminyl-tRNA synthetases. The reaction takes place in the presence of glutamine and ATP through an activated phospho-Asp-tRNA(Asn) or phospho-Glu-tRNA(Gln). The protein is Aspartyl/glutamyl-tRNA(Asn/Gln) amidotransferase subunit B of Beijerinckia indica subsp. indica (strain ATCC 9039 / DSM 1715 / NCIMB 8712).